Consider the following 183-residue polypeptide: TATA-box-binding protein (183 aa).

2 consecutive repeat copies span residues 8-84 and 99-175.

The protein belongs to the TBP family.

Its function is as follows. General factor that plays a role in the activation of archaeal genes transcribed by RNA polymerase. Binds specifically to the TATA box promoter element which lies close to the position of transcription initiation. The sequence is that of TATA-box-binding protein from Methanosphaera stadtmanae (strain ATCC 43021 / DSM 3091 / JCM 11832 / MCB-3).